A 215-amino-acid polypeptide reads, in one-letter code: Ribose-5-phosphate isomerase A (215 aa).

Residues 26 to 29 (TGST), 79 to 82 (DGAD), and 92 to 95 (KGGG) contribute to the substrate site. E101 (proton acceptor) is an active-site residue. A substrate-binding site is contributed by K119.

The protein belongs to the ribose 5-phosphate isomerase family. In terms of assembly, homodimer.

The catalysed reaction is aldehydo-D-ribose 5-phosphate = D-ribulose 5-phosphate. The protein operates within carbohydrate degradation; pentose phosphate pathway; D-ribose 5-phosphate from D-ribulose 5-phosphate (non-oxidative stage): step 1/1. Catalyzes the reversible conversion of ribose-5-phosphate to ribulose 5-phosphate. The sequence is that of Ribose-5-phosphate isomerase A from Stenotrophomonas maltophilia (strain R551-3).